The following is a 579-amino-acid chain: 2-succinyl-5-enolpyruvyl-6-hydroxy-3-cyclohexene-1-carboxylate synthase (579 aa).

It belongs to the TPP enzyme family. MenD subfamily. As to quaternary structure, homodimer. It depends on Mg(2+) as a cofactor. Mn(2+) serves as cofactor. Requires thiamine diphosphate as cofactor.

The catalysed reaction is isochorismate + 2-oxoglutarate + H(+) = 5-enolpyruvoyl-6-hydroxy-2-succinyl-cyclohex-3-ene-1-carboxylate + CO2. It participates in quinol/quinone metabolism; 1,4-dihydroxy-2-naphthoate biosynthesis; 1,4-dihydroxy-2-naphthoate from chorismate: step 2/7. The protein operates within quinol/quinone metabolism; menaquinone biosynthesis. Functionally, catalyzes the thiamine diphosphate-dependent decarboxylation of 2-oxoglutarate and the subsequent addition of the resulting succinic semialdehyde-thiamine pyrophosphate anion to isochorismate to yield 2-succinyl-5-enolpyruvyl-6-hydroxy-3-cyclohexene-1-carboxylate (SEPHCHC). The polypeptide is 2-succinyl-5-enolpyruvyl-6-hydroxy-3-cyclohexene-1-carboxylate synthase (Shewanella frigidimarina (strain NCIMB 400)).